The sequence spans 367 residues: Beta sliding clamp (367 aa).

This sequence belongs to the beta sliding clamp family. As to quaternary structure, forms a ring-shaped head-to-tail homodimer around DNA which binds and tethers DNA polymerases and other proteins to the DNA. The DNA replisome complex has a single clamp-loading complex (3 tau and 1 each of delta, delta', psi and chi subunits) which binds 3 Pol III cores (1 core on the leading strand and 2 on the lagging strand) each with a beta sliding clamp dimer. Additional proteins in the replisome are other copies of gamma, psi and chi, Ssb, DNA helicase and RNA primase.

The protein localises to the cytoplasm. In terms of biological role, confers DNA tethering and processivity to DNA polymerases and other proteins. Acts as a clamp, forming a ring around DNA (a reaction catalyzed by the clamp-loading complex) which diffuses in an ATP-independent manner freely and bidirectionally along dsDNA. Initially characterized for its ability to contact the catalytic subunit of DNA polymerase III (Pol III), a complex, multichain enzyme responsible for most of the replicative synthesis in bacteria; Pol III exhibits 3'-5' exonuclease proofreading activity. The beta chain is required for initiation of replication as well as for processivity of DNA replication. This Proteus mirabilis protein is Beta sliding clamp (dnaN).